Here is a 151-residue protein sequence, read N- to C-terminus: uncharacterized protein (151 aa).

It to M.jannaschii MJ1244 and MJ1245.

This is an uncharacterized protein from Methanothermobacter thermautotrophicus (strain ATCC 29096 / DSM 1053 / JCM 10044 / NBRC 100330 / Delta H) (Methanobacterium thermoautotrophicum).